The sequence spans 472 residues: tRNA-2-methylthio-N(6)-dimethylallyladenosine synthase (472 aa).

The interval 1–24 (MTGTPDVFPPATPGGTPLVALPAG) is disordered. The MTTase N-terminal domain occupies 33–150 (GKLYIKTHGC…LPELIRARRE (118 aa)). 6 residues coordinate [4Fe-4S] cluster: Cys42, Cys79, Cys113, Cys187, Cys191, and Cys194. One can recognise a Radical SAM core domain in the interval 173 to 407 (RADGASAFVS…RINAHAAGIS (235 aa)). Residues 408 to 471 (EKMVGTVQTV…TNSLRARVVA (64 aa)) enclose the TRAM domain.

The protein belongs to the methylthiotransferase family. MiaB subfamily. As to quaternary structure, monomer. [4Fe-4S] cluster is required as a cofactor.

It localises to the cytoplasm. It carries out the reaction N(6)-dimethylallyladenosine(37) in tRNA + (sulfur carrier)-SH + AH2 + 2 S-adenosyl-L-methionine = 2-methylsulfanyl-N(6)-dimethylallyladenosine(37) in tRNA + (sulfur carrier)-H + 5'-deoxyadenosine + L-methionine + A + S-adenosyl-L-homocysteine + 2 H(+). In terms of biological role, catalyzes the methylthiolation of N6-(dimethylallyl)adenosine (i(6)A), leading to the formation of 2-methylthio-N6-(dimethylallyl)adenosine (ms(2)i(6)A) at position 37 in tRNAs that read codons beginning with uridine. The chain is tRNA-2-methylthio-N(6)-dimethylallyladenosine synthase from Stenotrophomonas maltophilia (strain R551-3).